The following is a 995-amino-acid chain: DNA polymerase (995 aa).

The protein belongs to the DNA polymerase type-B family.

The catalysed reaction is DNA(n) + a 2'-deoxyribonucleoside 5'-triphosphate = DNA(n+1) + diphosphate. The protein is DNA polymerase (RF1) of Kluyveromyces lactis (strain ATCC 8585 / CBS 2359 / DSM 70799 / NBRC 1267 / NRRL Y-1140 / WM37) (Yeast).